Here is a 494-residue protein sequence, read N- to C-terminus: Glutamate--tRNA ligase (494 aa).

The 'HIGH' region signature appears at 10–20 (PSPTGDPHVGT). Zn(2+) is bound by residues cysteine 107, cysteine 109, cysteine 134, and histidine 136. Positions 251–255 (KLSKR) match the 'KMSKS' region motif. Lysine 254 is a binding site for ATP.

The protein belongs to the class-I aminoacyl-tRNA synthetase family. Glutamate--tRNA ligase type 1 subfamily. In terms of assembly, monomer. Requires Zn(2+) as cofactor.

It localises to the cytoplasm. It carries out the reaction tRNA(Glu) + L-glutamate + ATP = L-glutamyl-tRNA(Glu) + AMP + diphosphate. In terms of biological role, catalyzes the attachment of glutamate to tRNA(Glu) in a two-step reaction: glutamate is first activated by ATP to form Glu-AMP and then transferred to the acceptor end of tRNA(Glu). The sequence is that of Glutamate--tRNA ligase from Pseudomonas paraeruginosa (strain DSM 24068 / PA7) (Pseudomonas aeruginosa (strain PA7)).